We begin with the raw amino-acid sequence, 257 residues long: Lysine-rich coiled-coil protein 1 (257 aa).

The disordered stretch occupies residues 145-257; that stretch reads NTSAHQASYK…MLWDQSILGF (113 aa). Residues 152-162 show a composition bias toward basic residues; that stretch reads SYKHIHQKRKR. Composition is skewed to basic and acidic residues over residues 163–176, 183–193, 200–212, and 219–228; these read HTEE…EERP, ACEEIDLDKYK, TEAE…TEKL, and RSRDVASKKE. Residues 210–248 are a coiled coil; the sequence is EKLKNRKEKRSRDVASKKEERKRRKEKKEQGQERTEEEM.

This is Lysine-rich coiled-coil protein 1 (KRCC1) from Bos taurus (Bovine).